A 157-amino-acid polypeptide reads, in one-letter code: Putative pre-16S rRNA nuclease (157 aa).

This sequence belongs to the YqgF nuclease family.

Its subcellular location is the cytoplasm. Its function is as follows. Could be a nuclease involved in processing of the 5'-end of pre-16S rRNA. This chain is Putative pre-16S rRNA nuclease, found in Anaplasma marginale (strain St. Maries).